The chain runs to 230 residues: Demethylmenaquinone methyltransferase (230 aa).

S-adenosyl-L-methionine contacts are provided by residues threonine 62, aspartate 80, aspartate 100–glycine 101, and serine 117.

This sequence belongs to the class I-like SAM-binding methyltransferase superfamily. MenG/UbiE family.

The enzyme catalyses a 2-demethylmenaquinol + S-adenosyl-L-methionine = a menaquinol + S-adenosyl-L-homocysteine + H(+). It participates in quinol/quinone metabolism; menaquinone biosynthesis; menaquinol from 1,4-dihydroxy-2-naphthoate: step 2/2. Methyltransferase required for the conversion of demethylmenaquinol (DMKH2) to menaquinol (MKH2). In Corynebacterium glutamicum (strain ATCC 13032 / DSM 20300 / JCM 1318 / BCRC 11384 / CCUG 27702 / LMG 3730 / NBRC 12168 / NCIMB 10025 / NRRL B-2784 / 534), this protein is Demethylmenaquinone methyltransferase.